We begin with the raw amino-acid sequence, 485 residues long: UDP-N-acetylmuramate--L-alanine ligase (485 aa).

120 to 126 contributes to the ATP binding site; the sequence is GSHGKTT.

This sequence belongs to the MurCDEF family.

It is found in the cytoplasm. It catalyses the reaction UDP-N-acetyl-alpha-D-muramate + L-alanine + ATP = UDP-N-acetyl-alpha-D-muramoyl-L-alanine + ADP + phosphate + H(+). It functions in the pathway cell wall biogenesis; peptidoglycan biosynthesis. Functionally, cell wall formation. In Rickettsia peacockii (strain Rustic), this protein is UDP-N-acetylmuramate--L-alanine ligase.